The primary structure comprises 460 residues: Lysosomal proton-coupled steroid conjugate and bile acid symporter SLC46A3 (460 aa).

An N-terminal signal peptide occupies residues 1-25; that stretch reads MKISFIEPAILLNAFAMTLTIPLTA. Residues 26–73 are Extracellular-facing; that stretch reads QYVYRRIWEETGNYTFASNSNGSECDQNKSSSIFAFREEVQKKASLFN. N-linked (GlcNAc...) asparagine glycans are attached at residues Asn38, Asn46, and Asn53. A helical membrane pass occupies residues 74–94; it reads LQVEMSALIPGLVSTFMLLAS. Residues 95-111 are Cytoplasmic-facing; the sequence is SDNHGRKLPMVLSSLGS. The chain crosses the membrane as a helical span at residues 112 to 132; it reads LGTNTWLCMMSYFDLPLQLLI. Over 133–135 the chain is Extracellular; sequence AST. A helical transmembrane segment spans residues 136–156; the sequence is FIGALFGNYTTFWGACFAYIV. The Cytoplasmic portion of the chain corresponds to 157 to 170; the sequence is DQQKEYKHRIIRIA. The chain crosses the membrane as a helical span at residues 171-191; the sequence is ILDFMLGVVTGLTGLSSGYFI. The Extracellular segment spans residues 192–195; sequence RELG. The chain crosses the membrane as a helical span at residues 196–216; the sequence is FVWSYFITAMVLIVNLAYILF. The Cytoplasmic segment spans residues 217-257; that stretch reads FLNDPIKESSSQIVTMSCIESLKDLFYRTYMLFKNGSSKRQ. Residues 258 to 278 form a helical membrane-spanning segment; the sequence is ALLCLLIFTLVIYFFVIIGIS. Over 279 to 301 the chain is Extracellular; sequence PIFTLYELGPPLCWNEVYIGYGS. A helical membrane pass occupies residues 302-322; that stretch reads ALGSVSFLSSFLGIWLFSYCL. The Cytoplasmic portion of the chain corresponds to 323 to 324; that stretch reads KD. The helical transmembrane segment at 325 to 345 threads the bilayer; that stretch reads IHIAYIGIFTTMVGMTLAAFT. At 346–347 the chain is on the extracellular side; the sequence is RT. The helical transmembrane segment at 348 to 368 threads the bilayer; that stretch reads TLMMFLVRIPFIFTIMPLSVL. Topologically, residues 369–381 are cytoplasmic; the sequence is RSMLSKVVHSTEQ. The chain crosses the membrane as a helical span at residues 382 to 402; the sequence is GALFACIAFLETLAGVTSTSA. Over 403-410 the chain is Extracellular; sequence YSGIYSAT. Residues 411–431 form a helical membrane-spanning segment; that stretch reads VAWYPGFIFLLSAGLLVLPAI. Residues 432-460 are Cytoplasmic-facing; the sequence is SLCCVKSIGWEEGSYTLLVHEEPSEHTSD. Positions 446 to 449 match the Tyrosine-based lysosomal-sorting motif motif; that stretch reads YTLL.

The protein belongs to the major facilitator superfamily. SLC46A family. Expressed in liver, kidney, small intestine and colon.

Its subcellular location is the lysosome membrane. The enzyme catalyses estrone 3-sulfate(out) + n H(+)(out) = estrone 3-sulfate(in) + n H(+)(in). It catalyses the reaction 25-hydroxyvitamin D3 sulfate(out) + n H(+)(out) = 25-hydroxyvitamin D3 sulfate(in) + n H(+)(in). The catalysed reaction is cholate(out) + n H(+)(out) = cholate(in) + n H(+)(in). It carries out the reaction glycocholate(out) + n H(+)(out) = glycocholate(in) + n H(+)(in). The enzyme catalyses taurocholate(out) + n H(+)(out) = taurocholate(in) + n H(+)(in). It catalyses the reaction dehydroepiandrosterone 3-sulfate(out) + n H(+)(out) = dehydroepiandrosterone 3-sulfate(in) + n H(+)(in). The catalysed reaction is N-acetyl-D-muramoyl-L-alanyl-D-isoglutamine(out) + n H(+)(out) = N-acetyl-D-muramoyl-L-alanyl-D-isoglutamine(in) + n H(+)(in). It carries out the reaction 2',3'-cGAMP(out) + n H(+)(out) = 2',3'-cGAMP(in) + n H(+)(in). Functionally, lysosomal proton-coupled steroid conjugate and bile acid transporter. Preferentially recognizes lipophilic steroid conjugates or bile acis as endogenous substrates and seems to mediate escape from lysosomes to the cytoplasm. Modulates hepatic cytosolic copper homeostasis, maybe acting as a lysosomal copper transporter and sequestering copper ions in the lysosome. Delivers pathogen-associated molecular patterns to cytosolic pattern recognition receptors as part of the innate immune response to microbes. Selectively transports bacterial muramyl dipeptide (MDP) into the cytosol for recognition by NOD2, triggering inflammatory responses. Likely acts as a redundant importer of cyclic GMP-AMP dinucleotides (cGAMPs) in monocyte and macrophage cell lineages. The transport mechanism, its electrogenicity and stoichiometry remain to be elucidated. This chain is Lysosomal proton-coupled steroid conjugate and bile acid symporter SLC46A3 (Slc46a3), found in Mus musculus (Mouse).